The following is a 62-amino-acid chain: Small ribosomal subunit protein bS21 (62 aa).

Residues 43–62 form a disordered region; that stretch reads EKRKRKAMALQKQRKRRSRY. The span at 44–62 shows a compositional bias: basic residues; sequence KRKRKAMALQKQRKRRSRY.

This sequence belongs to the bacterial ribosomal protein bS21 family.

This Trichodesmium erythraeum (strain IMS101) protein is Small ribosomal subunit protein bS21.